The sequence spans 1131 residues: Tyrosine-protein kinase JAK2 (1131 aa).

The tract at residues 1-239 (MGMACLTMTE…RYRFRRFIEQ (239 aa)) is interaction with cytokine/interferon/growth hormone receptors. In terms of domain architecture, FERM spans 37-380 (PVLQVYLYHS…GYYRLTADAH (344 aa)). Tyrosine 119 carries the post-translational modification Phosphotyrosine; by autocatalysis. A phosphotyrosine mark is found at tyrosine 372 and tyrosine 373. The SH2; atypical domain maps to 401–482 (HGPISMDFAI…NLKDLLNCYQ (82 aa)). Serine 523 bears the Phosphoserine mark. One can recognise a Protein kinase 1 domain in the interval 545–809 (LIFNESLGQG…AIIRDLNSLF (265 aa)). Tyrosine 570 and tyrosine 813 each carry phosphotyrosine. The region spanning 849–1126 (LKFLQQLGKG…RDLALRVDQI (278 aa)) is the Protein kinase 2 domain. ATP is bound at residue 855 to 863 (LGKGNFGSV). Residue tyrosine 868 is modified to Phosphotyrosine; by autocatalysis. Lysine 882 lines the ATP pocket. Residues tyrosine 966 and tyrosine 972 each carry the phosphotyrosine; by autocatalysis modification. Aspartate 976 acts as the Proton acceptor in catalysis. A phosphotyrosine; by autocatalysis mark is found at tyrosine 1007 and tyrosine 1008.

This sequence belongs to the protein kinase superfamily. Tyr protein kinase family. JAK subfamily. Interacts with IL23R, SKB1 and STAM2. Interacts with EPOR. Interacts with LYN. Interacts with SIRPA. Interacts with SH2B1. Interacts with TEC. Interacts with IFNGR2 (via intracellular domain). Interacts with LEPR (Isoform B). Interacts with HSP90AB1; promotes functional activation in a heat shock-dependent manner. Interacts with STRA6. Interacts with ASB2; the interaction targets JAK2 for Notch-induced proteasomal degradation. It depends on Mg(2+) as a cofactor. Autophosphorylated, leading to regulate its activity. Leptin promotes phosphorylation on tyrosine residues, including phosphorylation on Tyr-813. Autophosphorylation on Tyr-119 in response to EPO down-regulates its kinase activity. Autophosphorylation on Tyr-868, Tyr-966 and Tyr-972 in response to growth hormone (GH) are required for maximal kinase activity. Also phosphorylated by TEC. Phosphorylated on tyrosine residues in response to interferon gamma signaling. Phosphorylated on tyrosine residues in response to a signaling cascade that is activated by increased cellular retinol. Post-translationally, undergoes Notch-induced ubiquitination and subsequent proteasomal degradation which is mediated by ASB1 or ASB2, the substrate-recognition components of probable ECS E3 ubiquitin-protein ligase complexes.

The protein localises to the endomembrane system. Its subcellular location is the cytoplasm. The protein resides in the nucleus. The enzyme catalyses L-tyrosyl-[protein] + ATP = O-phospho-L-tyrosyl-[protein] + ADP + H(+). Regulated by autophosphorylation, can both activate or decrease activity. Heme regulates its activity by enhancing the phosphorylation on Tyr-1007 and Tyr-1008. In terms of biological role, non-receptor tyrosine kinase involved in various processes such as cell growth, development, differentiation or histone modifications. Mediates essential signaling events in both innate and adaptive immunity. In the cytoplasm, plays a pivotal role in signal transduction via its association with type I receptors such as growth hormone (GHR), prolactin (PRLR), leptin (LEPR), erythropoietin (EPOR), thrombopoietin (THPO); or type II receptors including IFN-alpha, IFN-beta, IFN-gamma and multiple interleukins. Following ligand-binding to cell surface receptors, phosphorylates specific tyrosine residues on the cytoplasmic tails of the receptor, creating docking sites for STATs proteins. Subsequently, phosphorylates the STATs proteins once they are recruited to the receptor. Phosphorylated STATs then form homodimer or heterodimers and translocate to the nucleus to activate gene transcription. For example, cell stimulation with erythropoietin (EPO) during erythropoiesis leads to JAK2 autophosphorylation, activation, and its association with erythropoietin receptor (EPOR) that becomes phosphorylated in its cytoplasmic domain. Then, STAT5 (STAT5A or STAT5B) is recruited, phosphorylated and activated by JAK2. Once activated, dimerized STAT5 translocates into the nucleus and promotes the transcription of several essential genes involved in the modulation of erythropoiesis. Part of a signaling cascade that is activated by increased cellular retinol and that leads to the activation of STAT5 (STAT5A or STAT5B). In addition, JAK2 mediates angiotensin-2-induced ARHGEF1 phosphorylation. Plays a role in cell cycle by phosphorylating CDKN1B. Cooperates with TEC through reciprocal phosphorylation to mediate cytokine-driven activation of FOS transcription. In the nucleus, plays a key role in chromatin by specifically mediating phosphorylation of 'Tyr-41' of histone H3 (H3Y41ph), a specific tag that promotes exclusion of CBX5 (HP1 alpha) from chromatin. Up-regulates the potassium voltage-gated channel activity of KCNA3. This chain is Tyrosine-protein kinase JAK2, found in Sus scrofa (Pig).